Here is a 770-residue protein sequence, read N- to C-terminus: Protein PAT1 homolog 1 (770 aa).

The disordered stretch occupies residues 1–42 (MFRYESLEDCPLDEDEDAFQGLGEEDEEIDQFNDDTFGSGAV). The tract at residues 1 to 84 (MFRYESLEDC…EMDLLGDHEE (84 aa)) is region A; interaction with DDX6/RCK. Residues 1 to 397 (MFRYESLEDC…HQSSHQDHLR (397 aa)) are involved in nuclear foci localization. The segment covering 7-33 (LEDCPLDEDEDAFQGLGEEDEEIDQFN) has biased composition (acidic residues). A region N; interaction with decapping machinery region spans residues 85 to 388 (NLAERLSKMV…LNGTGDRGGH (304 aa)). Positions 86–95 (LAERLSKMVI) match the Nuclear export signal motif. Positions 155–195 (PQRPLQGPEDDRDLSERALPRRSTSPIIGSPPVRAVPIGTP) are disordered. Serine 177 is subject to Phosphoserine. Phosphothreonine is present on threonine 178. Phosphoserine occurs at positions 179 and 184. Threonine 194 is subject to Phosphothreonine. Arginine 217, arginine 223, and arginine 263 each carry asymmetric dimethylarginine. The tract at residues 223–397 (RYPAPYGERI…HQSSHQDHLR (175 aa)) is involved in RNA-binding. Position 278 is a phosphoserine (serine 278). Arginine 284 carries the asymmetric dimethylarginine modification. 2 disordered regions span residues 319–340 (FSAP…GPHL) and 376–396 (HRNL…QDHL). A compositionally biased stretch (pro residues) spans 321–337 (APPPATPPPQQHPPGPG). At arginine 385 the chain carries Omega-N-methylarginine. The span at 385-396 (RGGHQSSHQDHL) shows a compositional bias: basic and acidic residues. Residues 389-448 (QSSHQDHLRKDPYANLMLQREKDWVSKIQMMQLQSTDPYLDDFYYQNYFEKLEKLSAAEE) are region H. Positions 398-770 (KDPYANLMLQ…TKLQLVQGIR (373 aa)) are involved in nuclear speckle localization. The interval 449-770 (IQGDGPKKER…TKLQLVQGIR (322 aa)) is region C.

This sequence belongs to the PAT1 family. In terms of assembly, interacts (via region A) with DDX6/RCK. Interacts (via region H and region C) with LSM1 and LSM4. Interacts (via region N) with DCP1A, DCP2, EDC3, EDC4 and XRN1. Interacts with the CCR4-NOT complex. Interacts with the Lsm-containing SMN-Sm protein complex. Interacts with EIF4ENIF1/4E-T.

The protein localises to the cytoplasm. Its subcellular location is the P-body. It localises to the nucleus. The protein resides in the PML body. It is found in the nucleus speckle. In terms of biological role, RNA-binding protein involved in deadenylation-dependent decapping of mRNAs, leading to the degradation of mRNAs. Acts as a scaffold protein that connects deadenylation and decapping machinery. Required for cytoplasmic mRNA processing body (P-body) assembly. The sequence is that of Protein PAT1 homolog 1 (Patl1) from Mus musculus (Mouse).